A 223-amino-acid polypeptide reads, in one-letter code: MKIDITDYNHADEILNPQLWKEIEETLLKMPLHVKASDQASKVGSLIFDPVGTNQYIKDELVPKHWKNNIPIPKRFDFLGTDIDFGKRDTLVEVQFSNYPFLLNNTVRSELFHKSNMDIDEEGMKVAIIITKGHMFPASNSSLYYEQAQNQLNSLAEYNVFDVPIRLVGLIEDFETDIDIVSTTYADKRYSRTITKRDTVKGKVIDTNTPNTRRRKRGTIVTY.

The Mg(2+) site is built by Asp-84 and Val-94.

Homodimer. The cofactor is Mg(2+).

It carries out the reaction Endonucleolytic cleavage of DNA to give specific double-stranded fragments with terminal 5'-phosphates.. Functionally, a P subtype restriction enzyme that recognizes the double-stranded sequence 5'-AGATCT-3' and cleaves after A-1. The polypeptide is Type II restriction enzyme BglII (bglIIR) (Bacillus subtilis).